A 416-amino-acid chain; its full sequence is CinA-like protein (416 aa).

Belongs to the CinA family.

The chain is CinA-like protein from Syntrophomonas wolfei subsp. wolfei (strain DSM 2245B / Goettingen).